The primary structure comprises 732 residues: Catalase-peroxidase (732 aa).

Positions 1–24 (MDAKTDDNSAGKCPVAHGSAGRTN) are disordered. A cross-link (tryptophyl-tyrosyl-methioninium (Trp-Tyr) (with M-245)) is located at residues 96-219 (WHSAGTYRIA…LGAVQMGLIY (124 aa)). His-97 serves as the catalytic Proton acceptor. The tryptophyl-tyrosyl-methioninium (Tyr-Met) (with W-96) cross-link spans 219-245 (YVNPEGPNGNPDPLAAARDIRDTFARM). Residue His-260 participates in heme b binding.

This sequence belongs to the peroxidase family. Peroxidase/catalase subfamily. As to quaternary structure, homodimer or homotetramer. Heme b serves as cofactor. In terms of processing, formation of the three residue Trp-Tyr-Met cross-link is important for the catalase, but not the peroxidase activity of the enzyme.

It carries out the reaction H2O2 + AH2 = A + 2 H2O. The enzyme catalyses 2 H2O2 = O2 + 2 H2O. Bifunctional enzyme with both catalase and broad-spectrum peroxidase activity. This chain is Catalase-peroxidase, found in Mesorhizobium japonicum (strain LMG 29417 / CECT 9101 / MAFF 303099) (Mesorhizobium loti (strain MAFF 303099)).